Here is a 338-residue protein sequence, read N- to C-terminus: Aspartate carbamoyltransferase catalytic subunit (338 aa).

Arg-71 and Thr-72 together coordinate carbamoyl phosphate. Position 99 (Lys-99) interacts with L-aspartate. The carbamoyl phosphate site is built by Arg-121, His-151, and Gln-154. L-aspartate is bound by residues Arg-184 and Arg-239. Carbamoyl phosphate is bound by residues Gly-280 and Pro-281.

It belongs to the aspartate/ornithine carbamoyltransferase superfamily. ATCase family. In terms of assembly, heterododecamer (2C3:3R2) of six catalytic PyrB chains organized as two trimers (C3), and six regulatory PyrI chains organized as three dimers (R2).

It carries out the reaction carbamoyl phosphate + L-aspartate = N-carbamoyl-L-aspartate + phosphate + H(+). The protein operates within pyrimidine metabolism; UMP biosynthesis via de novo pathway; (S)-dihydroorotate from bicarbonate: step 2/3. Catalyzes the condensation of carbamoyl phosphate and aspartate to form carbamoyl aspartate and inorganic phosphate, the committed step in the de novo pyrimidine nucleotide biosynthesis pathway. This chain is Aspartate carbamoyltransferase catalytic subunit, found in Stutzerimonas stutzeri (strain A1501) (Pseudomonas stutzeri).